A 258-amino-acid polypeptide reads, in one-letter code: Acetylglutamate kinase (258 aa).

Substrate is bound by residues Gly-44 to Gly-45, Arg-66, and Asn-158. ATP is bound by residues Asp-181 to Leu-186 and Ile-209 to Thr-211.

Belongs to the acetylglutamate kinase family. ArgB subfamily. As to quaternary structure, homodimer.

It is found in the cytoplasm. The catalysed reaction is N-acetyl-L-glutamate + ATP = N-acetyl-L-glutamyl 5-phosphate + ADP. The protein operates within amino-acid biosynthesis; L-arginine biosynthesis; N(2)-acetyl-L-ornithine from L-glutamate: step 2/4. Catalyzes the ATP-dependent phosphorylation of N-acetyl-L-glutamate. In Escherichia coli O6:K15:H31 (strain 536 / UPEC), this protein is Acetylglutamate kinase.